A 563-amino-acid chain; its full sequence is BOS complex subunit NCLN (563 aa).

The signal sequence occupies residues 1–42; the sequence is MLEEAGEVLENMLKASCLPLGFIVFLPAVLLLVAPPLPAADA. Over 43 to 522 the chain is Lumenal; it reads AHEFTVYRMQ…VMNAYRVKPA (480 aa). Residues Asn-241 and Asn-428 are each glycosylated (N-linked (GlcNAc...) asparagine). The helical transmembrane segment at 523–543 threads the bilayer; the sequence is IFDLLLAVCIGAYLGMAYTAV. Residues 544–563 are Cytoplasmic-facing; sequence QHFDLLYKTVQRLLVKAKTQ.

It belongs to the nicastrin family. In terms of assembly, component of the back of Sec61 (BOS) complex, composed of NCLN/Nicalin, NOMO1 and TMEM147. The BOS complex is part of the multi-pass translocon (MPT) complex, composed of three subcomplexes, the GEL complex (composed of RAB5IF/OPTI and TMCO1), the BOS complex (composed of NCLN/Nicalin, NOMO1 and TMEM147) and the PAT complex (composed of WDR83OS/Asterix and CCDC47). The MPT complex associates with the SEC61 complex.

The protein resides in the endoplasmic reticulum membrane. Its function is as follows. Component of the multi-pass translocon (MPT) complex that mediates insertion of multi-pass membrane proteins into the lipid bilayer of membranes. The MPT complex takes over after the SEC61 complex: following membrane insertion of the first few transmembrane segments of proteins by the SEC61 complex, the MPT complex occludes the lateral gate of the SEC61 complex to promote insertion of subsequent transmembrane regions. May antagonize Nodal signaling and subsequent organization of axial structures during mesodermal patterning, via its interaction with NOMO. The sequence is that of BOS complex subunit NCLN from Canis lupus familiaris (Dog).